The primary structure comprises 474 residues: Immunoglobulin heavy constant mu (474 aa).

The segment at Gly1 to Val105 is CH1. Topologically, residues Gly1–Thr450 are extracellular. Ig-like domains are found at residues Pro6–Pro102, Pro111–Ser211, Pro229–Ser319, and Pro329–Asp430. 2 disulfide bridges follow: Cys28–Cys88 and Cys134–Cys197. N-linked (GlcNAc...) (complex) asparagine glycosylation occurs at Asn46. The segment at Ile106 to Asp217 is CH2. Residue Asn209 is glycosylated (N-linked (GlcNAc...) (complex) asparagine). The tract at residues Gln218–Gly323 is CH3. 2 disulfides stabilise this stretch: Cys244–Cys303 and Cys351–Cys413. N-linked (GlcNAc...) asparagine glycans are attached at residues Asn272 and Asn279. Residues Val324–Ser452 form a CH4 region. The important for IgM oligomerization stretch occupies residues Val437 to Thr453. N-linked (GlcNAc...) asparagine glycosylation occurs at Asp440. A helical membrane pass occupies residues Ala451 to Phe471. Topologically, residues Lys472–Lys474 are cytoplasmic.

As to quaternary structure, the basic structural unit of both sIgM and mIgM molecules consists of two identical heavy chains and two identical light chains; disulfide-linked. N-terminal variable regions of the heavy and light chains form the antigen binding sites, whereas the C-terminal constant regions of the heavy chains interact with immune receptors to mediate effector functions. In terms of assembly, part of IgM antibody. Forms high order oligomers, homopentamers stabilized by the JCHAIN and homohexamers that lack JCHAIN. The oligomerization amplifies an inherently low affinity of IgM antibodies for the antigen by multi-point attachment (avidity). Adjacent IgM protomers associate via interchain disulfide links to form an asymmetric pentameric structure with a 50 degree gap. A single copy of JCHAIN is covalently linked to the first and the fifth IgM monomers via interchain disulfide bonds thus closing the pentamer ring. Only JCHAIN-containing IgM binds PIGR secretory component (via D1-CDR1 region); this interaction is a prerequisite for IgM transcytosis across mucosal epithelium. Pentameric sIgM interacts (via CH4 domain) with FCRM (via Ig-like domain); the interaction is glycan-independent and multivalent theoretically involving up to eight binding sites for the IgM pentamer. Interacts with FCAMR; this interaction facilitates the endocytosis of IgM-coated microbes or IgM-antigen immune complexes. Antigen-bound IgM (via the Fc region) binds to globular domains of C1q component of the complement system, all three modules C1QA, C1QB and C1QC being involved in IgM binding; this interaction is multivalent. Pentameric sIgM (via Fc region) interacts with CD5L (via SRCR2) through interchain disulfide-linkages; this interaction protects CD5L from renal excretion and provides for high levels of CD5L in circulation. Part of IgM B cell receptor complex on pre-B cells, immature and mature B cells. The BCR complex consists of one membrane-bound IgM molecule responsible for antigen binding, non-covalently associated with CD79A and CD79B signaling chains. Post-translationally, N-glycosylated; important for IgM secretion and its localization at the plasma membrane. The interaction with FCMR is glycan-independent.

The protein resides in the secreted. Its subcellular location is the cell membrane. Functionally, constant region of immunoglobulin heavy chains. Immunoglobulins, also known as antibodies, are membrane-bound or secreted glycoproteins produced by B lymphocytes. In the recognition phase of humoral immunity, the membrane-bound immunoglobulins serve as receptors which, upon binding of a specific antigen, trigger the clonal expansion and differentiation of B lymphocytes into immunoglobulins-secreting plasma cells. Secreted immunoglobulins mediate the effector phase of humoral immunity, which results in the elimination of bound antigens. The antigen binding site is formed by the variable domain of one heavy chain, together with that of its associated light chain. Thus, each immunoglobulin has two antigen binding sites with remarkable affinity for a particular antigen. The variable domains are assembled by a process called V-(D)-J rearrangement and can then be subjected to somatic hypermutations which, after exposure to antigen and selection, allow affinity maturation for a particular antigen. Constant region of secreted IgM (sIgM), also known as the Fc region of IgM antibody. Able to multimerize, forms high order polymers, mainly pentamers and occasionally hexamers, providing for multivalency and high avidity recognition of antigens. Natural sIgM are polyreactive and recognize conserved self- and pathogen-derived structures, whereas immune sIgM are secreted only upon exposure to pathogens and are antigen-specific. Both natural and immune sIgM are required for an efficient humoral immune response to infection. Mediates sIgM effector functions mostly via Fc receptors and the complement system. On lymphoid cells binds high-affinity Fc receptor FCMR and promotes induction of an efficient neutralizing IgG response while maintaining tolerance to self-antigens. Recruits C1q complement component to initiate the classical complement pathway, facilitating the recognition and neutralization of pathogens by the host. Together with C1q and mannose-binding lectin promotes the phagocytosis of apoptotic cells by macrophages, ensuring the clearance of potential autoimmune epitopes from tissues. Involved in mucosal immunity. It is transported by transcytosis across mucosal epithelium by PIGR and secreted on the apical side in complex with PIGR secretory component to scan mucosal lining for pathogens. IgM-antigen complexes undergo FCMR-mediated retrotranscytosis across mucosal M cells toward antigen-presenting cells in mucosal lymphoid tissues. Its function is as follows. Constant region of membrane-bound IgM, part of the B cell receptor complex (BCR). IgM BCR provides constitutive tonic signaling for B cell survival. Mediates pre-BCR signaling that regulates B cell selection and rearrangement of Ig genes via allelic exclusion. This is Immunoglobulin heavy constant mu from Homo sapiens (Human).